A 319-amino-acid polypeptide reads, in one-letter code: ADP-ribosyl cyclase/cyclic ADP-ribose hydrolase 2 (319 aa).

The first 33 residues, 1 to 33 (MAVQACALSLRLGLWMSLLLPVLPGAGARAAGA), serve as a signal peptide directing secretion. Intrachain disulfides connect cysteine 52/cysteine 68, cysteine 84/cysteine 164, and cysteine 145/cysteine 158. N-linked (GlcNAc...) asparagine glycosylation is found at asparagine 67 and asparagine 96. NAD(+) is bound at residue tryptophan 110. Tryptophan 110 contributes to the nicotinamide binding site. Residue asparagine 149 is glycosylated (N-linked (GlcNAc...) asparagine). An NAD(+)-binding site is contributed by tryptophan 173. An N-linked (GlcNAc...) asparagine glycan is attached at asparagine 193. Position 211 (glutamate 211) interacts with NAD(+). 2 cysteine pairs are disulfide-bonded: cysteine 239–cysteine 260 and cysteine 272–cysteine 281. A lipid anchor (GPI-anchor amidated serine) is attached at serine 294. A propeptide spanning residues 295–319 (PALHAIGDISLIISLLVALASSSQA) is cleaved from the precursor.

Belongs to the ADP-ribosyl cyclase family. Homodimer. Pancreatic islets, kidney, spleen, heart, thymus, intestine and salivary gland.

It localises to the cell membrane. It catalyses the reaction NAD(+) + H2O = ADP-D-ribose + nicotinamide + H(+). The catalysed reaction is NAD(+) = cyclic ADP-beta-D-ribose + nicotinamide + H(+). The enzyme catalyses cyclic ADP-beta-D-ribose + H2O = ADP-D-ribose. Catalyzes both the synthesis of cyclic ADP-beta-D-ribose (cADPR) from NAD(+), and its hydrolysis to ADP-D-ribose (ADPR). Cyclic ADPR is known to serve as an endogenous second messenger that elicits calcium release from intracellular stores, and thus regulates the mobilization of intracellular calcium. May be involved in pre-B-cell growth. The chain is ADP-ribosyl cyclase/cyclic ADP-ribose hydrolase 2 (Bst1) from Rattus norvegicus (Rat).